A 3224-amino-acid chain; its full sequence is E3 SUMO-protein ligase RanBP2 (3224 aa).

A Phosphothreonine modification is found at Thr-19. A Phosphoserine modification is found at Ser-21. 7 TPR repeats span residues 26–59, 60–93, 94–128, 165–201, 287–319, 583–616, and 648–681; these read SMKG…QERD, PKAH…NPTQ, KDLV…FPGS, VHVN…RSSL, GHFY…AALC, QKTG…LKII, and EDAH…VSYW. The disordered stretch occupies residues 760–802; it reads GPLYKNGSLRNADSEIKHSTPSPTRYSLSPSKSYKYSPKTPPR. Phosphothreonine is present on Thr-779. Ser-781, Ser-788, and Ser-837 each carry phosphoserine. The segment covering 785-797 has biased composition (low complexity); the sequence is YSLSPSKSYKYSP. Position 945 is an asymmetric dimethylarginine (Arg-945). Residues Ser-948 and Ser-955 each carry the phosphoserine modification. Copy 1 of the repeat occupies 1001-1002; that stretch reads FG. The 22 X 2 AA repeats of F-G stretch occupies residues 1001 to 3206; it reads FGKTNFVQPM…DTVKKIESFG (2206 aa). Position 1016 is an asymmetric dimethylarginine; alternate (Arg-1016). At Arg-1016 the chain carries Omega-N-methylarginine; alternate. Residue Thr-1098 is modified to Phosphothreonine. Repeat 2 spans residues 1101 to 1102; the sequence is FG. Residues Ser-1103, Ser-1107, and Ser-1110 each carry the phosphoserine modification. Residues 1138-1174 form a disordered region; sequence GKSVFGTPTLETANKNHETDGGSAHGDDDDDGPHFEP. Repeat unit 3 spans residues 1142 to 1143; sequence FG. Thr-1144 is modified (phosphothreonine). Residues Ser-1160 and Ser-1249 each carry the phosphoserine modification. Positions 1171-1307 constitute a RanBD1 1 domain; that stretch reads HFEPVVPLPD…FEEAQSILKA (137 aa). Residue Lys-1350 forms a Glycyl lysine isopeptide (Lys-Gly) (interchain with G-Cter in SUMO2) linkage. A RanBP2-type 1 zinc finger spans residues 1351–1381; that stretch reads KEGSWWHCNSCSLKNASTAKKCVSCQNLNPS. Residues Thr-1396 and Thr-1412 each carry the phosphothreonine modification. Residue Lys-1414 forms a Glycyl lysine isopeptide (Lys-Gly) (interchain with G-Cter in SUMO2) linkage. Residues 1415–1444 form a RanBP2-type 2 zinc finger; sequence KEGHWDCSICLVRNEPTVSRCIACQNTKSA. A phosphoserine mark is found at Ser-1443, Ser-1450, and Ser-1456. Residues 1459 to 1460 form repeat 4; it reads FG. The RanBP2-type 3 zinc-finger motif lies at 1479 to 1508; it reads KEGQWDCSACLVQNEGSSTKCAACQNPRKQ. 2 positions are modified to phosphoserine: Ser-1509 and Ser-1520. Copy 5 of the repeat occupies 1523 to 1524; that stretch reads FG. The segment at 1543-1572 adopts a RanBP2-type 4 zinc-finger fold; the sequence is KEGQWDCSSCLVRNEANATRCVACQNPDKP. The tract at residues 1569–1595 is disordered; it reads PDKPSPSTSVPAPASFKFGTSETSKAP. Position 1573 is a phosphoserine (Ser-1573). Residues 1573–1583 are compositionally biased toward low complexity; that stretch reads SPSTSVPAPAS. Repeat 6 spans residues 1586-1587; that stretch reads FG. Lys-1596 participates in a covalent cross-link: Glycyl lysine isopeptide (Lys-Gly) (interchain with G-Cter in SUMO2). Lys-1605 participates in a covalent cross-link: Glycyl lysine isopeptide (Lys-Gly) (interchain with G-Cter in SUMO1); alternate. A Glycyl lysine isopeptide (Lys-Gly) (interchain with G-Cter in SUMO2); alternate cross-link involves residue Lys-1605. The RanBP2-type 5 zinc-finger motif lies at 1606–1635; it reads KEGQWDCSVCLVRNEASATKCIACQNPGKQ. Residues 1633-1653 show a composition bias toward polar residues; it reads GKQNQTTSAVSTPASSETSKA. The tract at residues 1633–1657 is disordered; that stretch reads GKQNQTTSAVSTPASSETSKAPKSG. Residue Lys-1655 forms a Glycyl lysine isopeptide (Lys-Gly) (interchain with G-Cter in SUMO2) linkage. Lys-1664 participates in a covalent cross-link: Glycyl lysine isopeptide (Lys-Gly) (interchain with G-Cter in SUMO1); alternate. Lys-1664 participates in a covalent cross-link: Glycyl lysine isopeptide (Lys-Gly) (interchain with G-Cter in SUMO2); alternate. The RanBP2-type 6 zinc finger occupies 1665 to 1694; the sequence is KEGQWDCSVCLVRNEASATKCIACQNPGKQ. The segment covering 1692 to 1712 has biased composition (polar residues); it reads GKQNQTTSAVSTPASSETSKA. Residues 1692–1716 are disordered; it reads GKQNQTTSAVSTPASSETSKAPKSG. Lys-1714 is covalently cross-linked (Glycyl lysine isopeptide (Lys-Gly) (interchain with G-Cter in SUMO2)). Lys-1723 is covalently cross-linked (Glycyl lysine isopeptide (Lys-Gly) (interchain with G-Cter in SUMO1); alternate). Residue Lys-1723 forms a Glycyl lysine isopeptide (Lys-Gly) (interchain with G-Cter in SUMO2); alternate linkage. RanBP2-type zinc fingers lie at residues 1724 to 1753 and 1781 to 1810; these read KEGQ…PSKQ and RKGQ…SKPT. Residues Ser-1833 and Ser-1835 each carry the phosphoserine modification. 2 tandem repeats follow at residues 1852 to 1853 and 1861 to 1862. Phosphoserine is present on residues Ser-1869 and Ser-1871. Copy 9 of the repeat occupies 1900-1901; the sequence is FG. Residues 1903-1928 form a disordered region; that stretch reads SEPGNQEKKSEKPLENGTGFQAQDIS. Residues 1907–1916 are compositionally biased toward basic and acidic residues; it reads NQEKKSEKPL. 2 repeat units span residues 1938–1939 and 1961–1962. Lys-1977 bears the N6-acetyllysine mark. Residue Thr-2005 is modified to Phosphothreonine. Ser-2008 is subject to Phosphoserine. Positions 2012–2148 constitute a RanBD1 2 domain; sequence HFEPVVQMPE…FEECQRLLLD (137 aa). Residue Lys-2022 forms a Glycyl lysine isopeptide (Lys-Gly) (interchain with G-Cter in SUMO2) linkage. The interval 2147 to 2287 is interaction with BICD2; it reads LDIPLQTPHK…SKSPAKLNQS (141 aa). Thr-2153 is subject to Phosphothreonine. The tract at residues 2188 to 2224 is disordered; it reads QTKVTEEENKGSGTGAAGASDTTIKPNPENTGPTLEW. A compositionally biased stretch (polar residues) spans 2211–2220; it reads IKPNPENTGP. Phosphoserine occurs at positions 2246 and 2251. Repeat 12 spans residues 2260 to 2261; the sequence is FG. Phosphoserine occurs at positions 2270, 2280, and 2290. A compositionally biased stretch (low complexity) spans 2273 to 2284; it reads SALSPSKSPAKL. The interval 2273–2307 is disordered; the sequence is SALSPSKSPAKLNQSGTSVGTDEESDVTQEEERDG. Thr-2293 bears the Phosphothreonine mark. Positions 2293–2305 are enriched in acidic residues; it reads TDEESDVTQEEER. Position 2297 is a phosphoserine (Ser-2297). A RanBD1 3 domain is found at 2309-2445; sequence YFEPVVPLPD…FDEAKTAQEK (137 aa). A phosphoserine mark is found at Ser-2462, Ser-2493, and Ser-2510. Residues 2486-2509 form a disordered region; sequence DDVADATSEVEVSSTSETTPKAVV. Residues 2492 to 2504 show a composition bias toward low complexity; sequence TSEVEVSSTSETT. Copy 13 of the repeat occupies 2516-2517; sequence FG. A Glycyl lysine isopeptide (Lys-Gly) (interchain with G-Cter in SUMO2) cross-link involves residue Lys-2522. At Ser-2526 the chain carries Phosphoserine. 2 consecutive repeat copies span residues 2535 to 2536 and 2545 to 2546. Residues 2556 to 2569 are compositionally biased toward polar residues; sequence NNSETSSVAQSGSE. The tract at residues 2556–2584 is disordered; that stretch reads NNSETSSVAQSGSESKVEPKKCELSKNSD. Residues 2570–2584 are compositionally biased toward basic and acidic residues; it reads SKVEPKKCELSKNSD. Residue Lys-2592 forms a Glycyl lysine isopeptide (Lys-Gly) (interchain with G-Cter in SUMO) linkage. A Glycyl lysine isopeptide (Lys-Gly) (interchain with G-Cter in SUMO1); alternate cross-link involves residue Lys-2594. Residue Lys-2594 forms a Glycyl lysine isopeptide (Lys-Gly) (interchain with G-Cter in SUMO2); alternate linkage. Lys-2612 is covalently cross-linked (Glycyl lysine isopeptide (Lys-Gly) (interchain with G-Cter in SUMO2)). Thr-2613 is subject to Phosphothreonine. The segment at 2631 to 2635 is interaction with sumoylated RANGAP1; the sequence is DVLIV. Tandem repeats lie at residues 2633 to 2685 and 2711 to 2761. Positions 2633–2685 are interaction with UBE2I; the sequence is LIVYELTPTAEQKALATKLKLPPTFFCYKNRPDYVSEEEEDDEDFETAVKKLN. The required for E3 SUMO-ligase activity stretch occupies residues 2633–2710; sequence LIVYELTPTA…ENTADNEKEC (78 aa). Positions 2633-2761 are 2 X 50 AA approximate repeats; sequence LIVYELTPTA…DFQSELQKVQ (129 aa). Phosphotyrosine is present on Tyr-2666. Ser-2668 and Ser-2741 each carry phosphoserine. Positions 2686–2761 are interaction with SUMO1; it reads GKLYLDGSEK…DFQSELQKVQ (76 aa). Thr-2743 is subject to Phosphothreonine. Residue Lys-2792 forms a Glycyl lysine isopeptide (Lys-Gly) (interchain with G-Cter in SUMO2) linkage. A disordered region spans residues 2793–2818; that stretch reads SEEPDSITKSISSPSVSSETMDKPVD. The span at 2799–2810 shows a compositional bias: low complexity; sequence ITKSISSPSVSS. Ser-2805 bears the Phosphoserine mark. Lys-2815 is covalently cross-linked (Glycyl lysine isopeptide (Lys-Gly) (interchain with G-Cter in SUMO2)). A run of 4 repeats spans residues 2840 to 2841, 2842 to 2843, 2863 to 2864, and 2880 to 2881. Ser-2900 bears the Phosphoserine mark. The RanBD1 4 domain maps to 2911–3046; that stretch reads HFEPIVSLPE…FEECQQNLMK (136 aa). A PPIase cyclophilin-type domain is found at 3067–3223; it reads FFDVCADGEP…RRITITECGQ (157 aa). 3 tandem repeats follow at residues 3106–3107, 3189–3190, and 3205–3206. Ser-3207 carries the post-translational modification Phosphoserine.

The protein belongs to the RanBP2 E3 ligase family. Part of the nuclear pore complex. Forms a complex with NXT1, NXF1 and RANGAP1. Forms a tight complex with RANBP1 and UBE2I. Interacts with SUMO1 but not SUMO2. Interacts with PRKN. Interacts with sumoylated RANGAP1. Interacts with CDCA8. Interacts with PML (isoform PML-4). Interacts with BICD2. Interacts with MCM3AP isoform GANP. Interacts with COX11. Interacts with synaptic plasticity regulator PANTS. As to quaternary structure, (Microbial infection) Interacts with HIV-1 Vpu protein; this interaction allows Vpu to down-regulate BLM sumoylation. In terms of processing, polyubiquitinated by PRKN, which leads to proteasomal degradation. The inner channel of the NPC has a different redox environment from the cytoplasm and allows the formation of interchain disulfide bonds between some nucleoporins, the significant increase of these linkages upon oxidative stress reduces the permeability of the NPC.

The protein resides in the nucleus. The protein localises to the nucleus membrane. It localises to the nuclear pore complex. It is found in the nucleus envelope. It participates in protein modification; protein sumoylation. Its function is as follows. E3 SUMO-protein ligase which facilitates SUMO1 and SUMO2 conjugation by UBE2I. Involved in transport factor (Ran-GTP, karyopherin)-mediated protein import via the F-G repeat-containing domain which acts as a docking site for substrates. Binds single-stranded RNA (in vitro). May bind DNA. Component of the nuclear export pathway. Specific docking site for the nuclear export factor exportin-1. Inhibits EIF4E-dependent mRNA export. Sumoylates PML at 'Lys-490' which is essential for the proper assembly of PML-NB. Recruits BICD2 to the nuclear envelope and cytoplasmic stacks of nuclear pore complex known as annulate lamellae during G2 phase of cell cycle. Probable inactive PPIase with no peptidyl-prolyl cis-trans isomerase activity. This Homo sapiens (Human) protein is E3 SUMO-protein ligase RanBP2 (RANBP2).